Consider the following 92-residue polypeptide: Nodulation protein F (92 aa).

The Carrier domain occupies 4–88 (QLTLEIISAI…DVVEAVRGLL (85 aa)). S45 is modified (O-(pantetheine 4'-phosphoryl)serine).

4'-phosphopantetheine is transferred from CoA to a specific serine of apo-NodF.

In terms of biological role, proposed to synthesize nod factor fatty acyl chain. Involved in trans-2,trans-4,trans-6,cis-11-octadecatetraenoic acid biosynthesis. The protein is Nodulation protein F (nodF) of Rhizobium leguminosarum bv. viciae.